Reading from the N-terminus, the 486-residue chain is Deleted in azoospermia protein 3 (486 aa).

A compositionally biased stretch (polar residues) spans 1–10 (MSAANPETPN). A disordered region spans residues 1–27 (MSAANPETPNSTISREASTQSSSAAAS). Residues 11-27 (STISREASTQSSSAAAS) show a composition bias toward low complexity. Positions 40–115 (NTVFVGGIDA…KKLKLGPAIR (76 aa)) constitute an RRM domain. DAZ domains lie at 167–190 (AYSA…YNYQ), 191–214 (EYPT…YNYQ), 215–238 (PFPA…YNYQ), 239–262 (AFPA…YNYQ), 263–286 (PFPA…YNYQ), 287–310 (AFPA…YNYQ), 311–334 (AFPA…YNYQ), 335–358 (AFPA…YNYQ), 359–382 (AFPA…YNYQ), 383–406 (AFPA…YNYQ), 407–430 (AFPA…YNYQ), and 431–454 (AFPA…YNYQ).

The protein belongs to the RRM DAZ family. Forms a heterodimer with BOLL and DAZL. Interacts with PUM2, DAZAP1, DAZAP2, DZIP1 and DZIP3. In terms of tissue distribution, testis specific.

It is found in the cytoplasm. It localises to the nucleus. Its function is as follows. RNA-binding protein that plays an essential role in spermatogenesis. May act by binding to the 3'-UTR of mRNAs and regulating their translation. This is Deleted in azoospermia protein 3 (DAZ3) from Homo sapiens (Human).